The sequence spans 101 residues: Large ribosomal subunit protein uL23 (101 aa).

Belongs to the universal ribosomal protein uL23 family. Part of the 50S ribosomal subunit. Contacts protein L29, and trigger factor when it is bound to the ribosome.

Functionally, one of the early assembly proteins it binds 23S rRNA. One of the proteins that surrounds the polypeptide exit tunnel on the outside of the ribosome. Forms the main docking site for trigger factor binding to the ribosome. This chain is Large ribosomal subunit protein uL23, found in Aromatoleum aromaticum (strain DSM 19018 / LMG 30748 / EbN1) (Azoarcus sp. (strain EbN1)).